A 157-amino-acid chain; its full sequence is 6,7-dimethyl-8-ribityllumazine synthase (157 aa).

5-amino-6-(D-ribitylamino)uracil contacts are provided by residues Phe22, 57–59 (AYE), and 81–83 (TVI). (2S)-2-hydroxy-3-oxobutyl phosphate is bound at residue 86 to 87 (GT). His89 serves as the catalytic Proton donor. Residue Phe114 coordinates 5-amino-6-(D-ribitylamino)uracil. Arg128 contacts (2S)-2-hydroxy-3-oxobutyl phosphate.

Belongs to the DMRL synthase family. As to quaternary structure, forms an icosahedral capsid composed of 60 subunits, arranged as a dodecamer of pentamers.

It carries out the reaction (2S)-2-hydroxy-3-oxobutyl phosphate + 5-amino-6-(D-ribitylamino)uracil = 6,7-dimethyl-8-(1-D-ribityl)lumazine + phosphate + 2 H2O + H(+). Its pathway is cofactor biosynthesis; riboflavin biosynthesis; riboflavin from 2-hydroxy-3-oxobutyl phosphate and 5-amino-6-(D-ribitylamino)uracil: step 1/2. Catalyzes the formation of 6,7-dimethyl-8-ribityllumazine by condensation of 5-amino-6-(D-ribitylamino)uracil with 3,4-dihydroxy-2-butanone 4-phosphate. This is the penultimate step in the biosynthesis of riboflavin. The protein is 6,7-dimethyl-8-ribityllumazine synthase of Pasteurella multocida (strain Pm70).